Consider the following 359-residue polypeptide: Putative plant UBX domain-containing protein 15 (359 aa).

One can recognise a UBX domain in the interval 277-357 (DRSVVCSISV…GIANSIISVT (81 aa)).

This chain is Putative plant UBX domain-containing protein 15, found in Arabidopsis thaliana (Mouse-ear cress).